Here is a 400-residue protein sequence, read N- to C-terminus: MQDIVREAMERDEAERQTQSSLEDSDDQFGDPRIVIVGAGGAGNNTINRLYNIGVEGADTVAINTDKQHLKMIEADTKILVGKSLTQGLGAGGDPSMGERATEMAQGTIKDVLGDADLVFVTAGMGGGTGTGAAPVVAKIAKEQGAIVVGMVSTPFNVERARTVKAEEGLENLRNEADSIIVLDNNRLLDYVPNLPIGKAFSVMDQIIAETVKGISETITQPSLINLDYADMSTIMNQGGVAVMLVGETQDKNKTQEVVNDAMNHPLLDVDYRGASGGLVHITGGPDLTLKEAEGIASNITERLEAAANVIWGARIQDEYKGKVRVMAIMTGVQSAQVLGPSTQKQADKSRQSIQSRESQQQHSGSEFDSSERAQTAQSGTWSDGGRDEVEKNNGLDVIR.

The segment covering 1 to 16 (MQDIVREAMERDEAER) has biased composition (basic and acidic residues). The interval 1–30 (MQDIVREAMERDEAERQTQSSLEDSDDQFG) is disordered. Residues 41 to 45 (GAGNN), 128 to 130 (GTG), Glu159, Arg162, and Asp205 contribute to the GTP site. The disordered stretch occupies residues 338–400 (VLGPSTQKQA…EKNNGLDVIR (63 aa)). Residues 352 to 364 (QSIQSRESQQQHS) are compositionally biased toward low complexity. Residues 365–382 (GSEFDSSERAQTAQSGTW) show a composition bias toward polar residues. Residues 385 to 400 (GGRDEVEKNNGLDVIR) are compositionally biased toward basic and acidic residues.

This sequence belongs to the FtsZ family. In terms of assembly, homodimer. Polymerizes to form a dynamic ring structure in a strictly GTP-dependent manner. Interacts directly with several other division proteins. Interacts with SepF.

Its subcellular location is the cytoplasm. Its function is as follows. Essential cell division protein that forms a contractile ring structure (Z ring) at the future cell division site. The regulation of the ring assembly controls the timing and the location of cell division. One of the functions of the FtsZ ring is to recruit other cell division proteins to the septum to produce a new cell wall between the dividing cells. Binds GTP and shows GTPase activity. Required for division ring constriction. The protein is Cell division protein FtsZ 2 of Haloferax volcanii (strain ATCC 29605 / DSM 3757 / JCM 8879 / NBRC 14742 / NCIMB 2012 / VKM B-1768 / DS2) (Halobacterium volcanii).